The chain runs to 115 residues: Pro-neuregulin-4, membrane-bound isoform (115 aa).

Topologically, residues 1–62 are extracellular; sequence MPTDHEEPCG…SSIQTKSNLF (62 aa). Positions 5-46 constitute an EGF-like domain; the sequence is HEEPCGPSHKSFCLNGGLCYVIPTIPSPFCRCVENYTGARCE. Disulfide bonds link cysteine 9–cysteine 23, cysteine 17–cysteine 34, and cysteine 36–cysteine 45. An N-linked (GlcNAc...) asparagine glycan is attached at asparagine 39. The chain crosses the membrane as a helical span at residues 63–83; the sequence is EAFVALAVLVTLIIGAFYFLC. At 84 to 115 the chain is on the cytoplasmic side; it reads RKGHFQRASSVQYDINLVETSSTSAHHSHEQH.

It belongs to the neuregulin family. In terms of assembly, interacts with ERBB4. In terms of processing, proteolytic cleavage close to the plasma membrane on the external face leads to the release of the soluble growth factor form. Post-translationally, extensive glycosylation precedes the proteolytic cleavage.

The protein localises to the cell membrane. It localises to the secreted. Functionally, low affinity ligand for the ERBB4 tyrosine kinase receptor. Concomitantly recruits ERBB1 and ERBB2 coreceptors, resulting in ligand-stimulated tyrosine phosphorylation and activation of the ERBB receptors. Does not bind to the ERBB1, ERBB2 and ERBB3 receptors. This is Pro-neuregulin-4, membrane-bound isoform (NRG4) from Homo sapiens (Human).